The sequence spans 209 residues: Protein N-terminal glutamine amidohydrolase (209 aa).

Catalysis depends on residues Cys-30, His-83, and Asp-99.

It belongs to the NTAQ1 family. In terms of assembly, monomer. Widely expressed.

Its subcellular location is the cytoplasm. It localises to the cytosol. The protein localises to the nucleus. It carries out the reaction N-terminal L-glutaminyl-[protein] + H2O = N-terminal L-glutamyl-[protein] + NH4(+). Its function is as follows. Mediates the side-chain deamidation of N-terminal glutamine residues to glutamate, an important step in N-end rule pathway of protein degradation. Conversion of the resulting N-terminal glutamine to glutamate renders the protein susceptible to arginylation, polyubiquitination and degradation as specified by the N-end rule. Does not act on substrates with internal or C-terminal glutamine and does not act on non-glutamine residues in any position. Does not deaminate acetylated N-terminal glutamine. With the exception of proline, all tested second-position residues on substrate peptides do not greatly influence the activity. In contrast, a proline at position 2, virtually abolishes deamidation of N-terminal glutamine. The polypeptide is Protein N-terminal glutamine amidohydrolase (Ntaq1) (Mus musculus (Mouse)).